We begin with the raw amino-acid sequence, 215 residues long: SAGA complex/transcription factor TFIID complex subunit Taf10 (215 aa).

Positions 1 to 77 (MSDINNNEPA…SRERHGSNYV (77 aa)) are disordered. Positions 23–42 (GNNSMSVDEQPETSSTNLPT) are enriched in polar residues. Residues 58–73 (NNEDSPKSDDSRERHG) show a composition bias toward basic and acidic residues. The Histone-fold domain occupies 58–203 (NNEDSPKSDD…VDDLSAALNE (146 aa)).

This sequence belongs to the TAF10 family. In terms of assembly, component of the 1.8 MDa SAGA (Spt-Ada-Gcn5 acetyltransferase) complex, which is composed of 19 subunits tra1, spt7, taf5, ngg1/ada3, sgf73, spt20, spt8, taf12, taf6, hfi1/ada1, ubp8, gcn5, ada2, spt3, sgf29, taf10, taf9, sgf11 and sus1. The SAGA complex is composed of 4 modules, namely the HAT (histone acetyltransferase) module (gcn5, ada2, ngg1/ada3 and sgf29), the DUB (deubiquitinating) module (ubp8, sgf11, sgf73 and sus1), the core or TAF (TBP-associated factor) module (taf5, taf6, taf9, taf10 and taf12), and the Tra1 or SPT (Suppressor of Ty) module (tra1, hfi1/ada1, spt3, spt7, spt8 and spt20). The Tra1/SPT module binds activators, the core module recruits TBP (TATA-binding protein), the HAT module contains the histone H3 acetyltransferase gcn5, and the DUB module comprises the histone H2B deubiquitinase ubp8. Component of the 1.2 MDa TFIID complex, which is composed of TATA-binding protein (TBP) and the 14 TBP-associated factors (TAFs). It comprises 1 copy of each taf1, taf2, taf3, taf7, taf8, taf11, taf13, 2 copies of each taf4, taf5, taf6, taf9, taf10, taf12, and 3 copies of taf14. In TFIID, taf10 heterodimerizes with taf3 and taf8.

It is found in the nucleus. Functionally, functions as a component of both the DNA-binding general transcription initiation factor complex TFIID and the transcription coactivator SAGA complex. Binding of TFIID to a promoter (with or without TATA element) is the initial step in pre-initiation complex (PIC) formation. TFIID plays a key role in the regulation of gene expression by RNA polymerase II through different activities such as transcription activator interaction, core promoter recognition and selectivity, TFIIA and TFIIB interaction, chromatin modification (histone acetylation by TAF1), facilitation of DNA opening and initiation of transcription. SAGA acts as a general cofactor required for essentially all RNA polymerase II transcription. At the promoters, SAGA is required for transcription pre-initiation complex (PIC) recruitment. It influences RNA polymerase II transcriptional activity through different activities such as TBP interaction (via core/TAF module) and promoter selectivity, interaction with transcription activators (via Tra1/SPT module), and chromatin modification through histone acetylation (via HAT module) and deubiquitination (via DUB module). SAGA preferentially acetylates histones H3 (to form H3K9ac, H3K14ac, H3K18ac and H3K23ac) and H2B and deubiquitinates histone H2B. SAGA interacts with DNA via upstream activating sequences (UASs). The chain is SAGA complex/transcription factor TFIID complex subunit Taf10 from Schizosaccharomyces pombe (strain 972 / ATCC 24843) (Fission yeast).